A 128-amino-acid chain; its full sequence is Infection structure-specific protein 56 (128 aa).

Composition is skewed to polar residues over residues H27 to H36 and T87 to S101. 2 disordered regions span residues H27–S48 and G86–A128. Over residues K115 to A128 the composition is skewed to basic and acidic residues.

Its function is as follows. General role in the development of germlings including formation of the infection structures. The protein is Infection structure-specific protein 56 (INF56) of Uromyces appendiculatus (Rust fungus).